Consider the following 65-residue polypeptide: Conotoxin Cal1.3 (65 aa).

Residues 1–18 (MRCLPVFIILLLLASTAA) form the signal peptide. Positions 19–49 (VDVAGSKLKRRLERKPYQGSQAYVKKTAFGL) are excised as a propeptide. 2 disulfide bridges follow: Cys-52/Cys-62 and Cys-53/Cys-59. Position 61 is a 4-hydroxyproline (Pro-61). Cys-62 is modified (cysteine amide).

It belongs to the conotoxin T superfamily. In terms of tissue distribution, expressed by the venom duct.

The protein resides in the secreted. Probable neurotoxin with unknown target. Possibly targets ion channels. The polypeptide is Conotoxin Cal1.3 (Californiconus californicus (California cone)).